The following is a 264-amino-acid chain: uncharacterized protein (264 aa).

2 disordered regions span residues 1 to 52 (MPRS…AVPG) and 123 to 207 (GGRW…PWTR). Residues 29–40 (AAHPTTSPTAAS) show a composition bias toward low complexity. Residues 144 to 154 (HFQSSGAQQES) are compositionally biased toward polar residues. Over residues 188–197 (ARKSACKCPR) the composition is skewed to basic residues.

This is an uncharacterized protein from Homo sapiens (Human).